A 362-amino-acid polypeptide reads, in one-letter code: S-adenosylmethionine:tRNA ribosyltransferase-isomerase (362 aa).

The protein belongs to the QueA family. As to quaternary structure, monomer.

Its subcellular location is the cytoplasm. The enzyme catalyses 7-aminomethyl-7-carbaguanosine(34) in tRNA + S-adenosyl-L-methionine = epoxyqueuosine(34) in tRNA + adenine + L-methionine + 2 H(+). The protein operates within tRNA modification; tRNA-queuosine biosynthesis. Transfers and isomerizes the ribose moiety from AdoMet to the 7-aminomethyl group of 7-deazaguanine (preQ1-tRNA) to give epoxyqueuosine (oQ-tRNA). The sequence is that of S-adenosylmethionine:tRNA ribosyltransferase-isomerase from Methylobacterium sp. (strain 4-46).